Consider the following 189-residue polypeptide: Prostaglandin-H2 D-isomerase (189 aa).

An N-terminal signal peptide occupies residues 1–24 (MATPSSLWLGLALLGTLGVLQTPA). At Gln25 the chain carries Pyrrolidone carboxylic acid. A glycan (N-linked (GlcNAc...) asparagine) is linked at Asn49. The active-site Nucleophile is the Cys63. An N-linked (GlcNAc...) asparagine glycan is attached at Asn76. Cys87 and Cys184 are joined by a disulfide.

The protein belongs to the calycin superfamily. Lipocalin family. As to quaternary structure, monomer. Abundant in the brain and CNS, where it is expressed in tissues of the blood-brain barrier and secreted into the cerebro-spinal fluid.

It is found in the rough endoplasmic reticulum. It localises to the nucleus membrane. Its subcellular location is the golgi apparatus. The protein resides in the cytoplasm. The protein localises to the perinuclear region. It is found in the secreted. It carries out the reaction prostaglandin H2 = prostaglandin D2. Its function is as follows. Catalyzes the conversion of PGH2 to PGD2, a prostaglandin involved in smooth muscle contraction/relaxation and a potent inhibitor of platelet aggregation. Involved in a variety of CNS functions, such as sedation, NREM sleep and PGE2-induced allodynia, and may have an anti-apoptotic role in oligodendrocytes. Binds small non-substrate lipophilic molecules, including biliverdin, bilirubin, retinal, retinoic acid and thyroid hormone, and may act as a scavenger for harmful hydrophobic molecules and as a secretory retinoid and thyroid hormone transporter. Possibly involved in development and maintenance of the blood-brain, blood-retina, blood-aqueous humor and blood-testis barrier. It is likely to play important roles in both maturation and maintenance of the central nervous system and male reproductive system. Involved in PLA2G3-dependent maturation of mast cells. PLA2G3 is secreted by immature mast cells and acts on nearby fibroblasts upstream to PTDGS to synthesize PGD2, which in turn promotes mast cell maturation and degranulation via PTGDR. The polypeptide is Prostaglandin-H2 D-isomerase (PTGDS) (Sus scrofa (Pig)).